We begin with the raw amino-acid sequence, 124 residues long: Ribonuclease pancreatic (124 aa).

2 residues coordinate substrate: K7 and R10. The active-site Proton acceptor is H12. 4 cysteine pairs are disulfide-bonded: C26–C84, C40–C95, C58–C110, and C65–C72. A glycan (N-linked (GlcNAc...) asparagine) is linked at N34. Residues 41-45 (KPVNT), K66, and R85 each bind substrate. Residue H119 is the Proton donor of the active site.

This sequence belongs to the pancreatic ribonuclease family. As to quaternary structure, monomer. Interacts with and forms tight 1:1 complexes with RNH1. Dimerization of two such complexes may occur. Interaction with RNH1 inhibits this protein. Pancreas.

It is found in the secreted. It carries out the reaction an [RNA] containing cytidine + H2O = an [RNA]-3'-cytidine-3'-phosphate + a 5'-hydroxy-ribonucleotide-3'-[RNA].. It catalyses the reaction an [RNA] containing uridine + H2O = an [RNA]-3'-uridine-3'-phosphate + a 5'-hydroxy-ribonucleotide-3'-[RNA].. Functionally, endonuclease that catalyzes the cleavage of RNA on the 3' side of pyrimidine nucleotides. Acts on single-stranded and double-stranded RNA. This chain is Ribonuclease pancreatic (RNASE1), found in Eudorcas thomsonii (Thomson's gazelle).